The sequence spans 106 residues: Urease subunit beta (106 aa).

Belongs to the urease beta subunit family. Heterotrimer of UreA (gamma), UreB (beta) and UreC (alpha) subunits. Three heterotrimers associate to form the active enzyme.

It is found in the cytoplasm. It catalyses the reaction urea + 2 H2O + H(+) = hydrogencarbonate + 2 NH4(+). Its pathway is nitrogen metabolism; urea degradation; CO(2) and NH(3) from urea (urease route): step 1/1. This is Urease subunit beta from Prochlorococcus marinus (strain AS9601).